The sequence spans 1062 residues: SLIT-ROBO Rho GTPase-activating protein 1 (1062 aa).

In terms of domain architecture, F-BAR spans 19 to 314; the sequence is SQVKEIRAQL…AVDNLEPRSD (296 aa). A coiled-coil region spans residues 352 to 382; sequence QAELMLRNQQLQSRLATLKIESEEVKKTTEA. Position 416 is a phosphoserine (serine 416). Residues 481-671 enclose the Rho-GAP domain; sequence GRRNSHARHQ…TIIIHHETIF (191 aa). Positions 720–779 constitute an SH3 domain; sequence CEPIEAIAKFDYVGRSARELSFKKGASLLLYHRASEDWWEGRHNGIDGLVPHQYIVVQDM. Over residues 785-799 the composition is skewed to polar residues; the sequence is DTLSQKADSEASSGP. A disordered region spans residues 785–931; the sequence is DTLSQKADSE…TGFNDHKPLD (147 aa). 2 positions are modified to phosphoserine: serine 812 and serine 894. The span at 899–908 shows a compositional bias: basic and acidic residues; it reads SRHDSLKKID. The residue at position 909 (serine 909) is a Phosphoserine. The segment covering 914 to 923 has biased composition (polar residues); sequence RSTSSGQYTG. Residues 933–960 are a coiled coil; the sequence is ETIAQDIEETMNTALNELRELERQSTVK. Over residues 974–988 the composition is skewed to polar residues; that stretch reads KNSPTPATSTESLSP. 2 disordered regions span residues 974 to 1013 and 1028 to 1062; these read KNSP…ETMS and KPPA…SCTM. Serine 976 is subject to Phosphoserine. Threonine 978 carries the post-translational modification Phosphothreonine. Positions 1004–1013 are enriched in low complexity; the sequence is STSSSSETMS. Serine 1009 carries the post-translational modification Phosphoserine. Polar residues predominate over residues 1053 to 1062; that stretch reads QGPTDKSCTM.

In terms of assembly, homodimer. Forms a heterooligomer with SRGAP2 and SRGAP3 through its F-BAR domain. Interacts with CDC42 and RHOA. Interacts with FASLG. Interacts (via SH3 domain) with ROBO1.

GTPase-activating protein for RhoA and Cdc42 small GTPases. Together with CDC42 seems to be involved in the pathway mediating the repulsive signaling of Robo and Slit proteins in neuronal migration. SLIT2, probably through interaction with ROBO1, increases the interaction of SRGAP1 with ROBO1 and inactivates CDC42. The sequence is that of SLIT-ROBO Rho GTPase-activating protein 1 (Srgap1) from Mus musculus (Mouse).